A 375-amino-acid polypeptide reads, in one-letter code: Stomatin-2 (375 aa).

Residues Met1–Gly75 form a disordered region. The segment covering Ser11–Asn50 has biased composition (low complexity). Residues Gly120 to Phe140 form a helical membrane-spanning segment.

The protein belongs to the band 7/mec-2 family.

It localises to the membrane. May be involved in cilia-related function. The chain is Stomatin-2 (sto-2) from Caenorhabditis elegans.